We begin with the raw amino-acid sequence, 431 residues long: Nuclear receptor subfamily 1 group I member 2 (431 aa).

NR C4-type zinc fingers lie at residues 38-58 and 74-99; these read CRVC…CEGC and CPFR…LRKC. Residues 38–104 constitute a DNA-binding region (nuclear receptor); that stretch reads CRVCGDKANG…RLRKCLESGM (67 aa). The Bipartite nuclear localization signal signature appears at 63 to 89; sequence RRAMKRNVRLRCPFRKGTCEITRKTRR. Residues 105 to 142 are hinge; sequence KKEMIMSDAAVEQRRALIKRKKREKIEAPPPGGQGLTE. Positions 143–430 constitute an NR LBD domain; the sequence is EQQALIQELM…LMQELFSSTD (288 aa). Residues S244 and 282-285 each bind hyperforin; that span reads ILRF.

The protein belongs to the nuclear hormone receptor family. NR1 subfamily. In terms of assembly, heterodimer with RXRA. Interacts with NCOA1. Interacts (via domain NR LBD) with CRY1 and CRY2 in a ligand-dependent manner.

It localises to the nucleus. Nuclear receptor that binds and is activated by a variety of endogenous and xenobiotic compounds. Transcription factor that activates the transcription of multiple genes involved in the metabolism and secretion of potentially harmful xenobiotics, endogenous compounds and drugs. Response to specific ligands is species-specific, due to differences in the ligand-binding domain. Activated by naturally occurring steroids, such as pregnenolone and progesterone. Binds to a response element in the promoters of the CYP3A4 and ABCB1/MDR1 genes. In Rattus norvegicus (Rat), this protein is Nuclear receptor subfamily 1 group I member 2 (Nr1i2).